A 542-amino-acid chain; its full sequence is Glutamyl-tRNA(Gln) amidotransferase subunit B, mitochondrial (542 aa).

The protein belongs to the GatB/GatE family. GatB subfamily. Subunit of the heterotrimeric GatFAB amidotransferase (AdT) complex, composed of A, B and F subunits.

It localises to the mitochondrion. The enzyme catalyses L-glutamyl-tRNA(Gln) + L-glutamine + ATP + H2O = L-glutaminyl-tRNA(Gln) + L-glutamate + ADP + phosphate + H(+). Functionally, allows the formation of correctly charged Gln-tRNA(Gln) through the transamidation of misacylated Glu-tRNA(Gln) in the mitochondria. The reaction takes place in the presence of glutamine and ATP through an activated gamma-phospho-Glu-tRNA(Gln). The polypeptide is Glutamyl-tRNA(Gln) amidotransferase subunit B, mitochondrial (Candida glabrata (strain ATCC 2001 / BCRC 20586 / JCM 3761 / NBRC 0622 / NRRL Y-65 / CBS 138) (Yeast)).